Reading from the N-terminus, the 115-residue chain is NADH-ubiquinone oxidoreductase chain 3 (115 aa).

Transmembrane regions (helical) follow at residues 3 to 23 (IMIT…IAFW), 55 to 75 (FFLV…LLPL), and 87 to 107 (MLTT…YEWL).

The protein belongs to the complex I subunit 3 family. Core subunit of respiratory chain NADH dehydrogenase (Complex I) which is composed of 45 different subunits. Interacts with TMEM186. Interacts with TMEM242.

The protein resides in the mitochondrion inner membrane. It carries out the reaction a ubiquinone + NADH + 5 H(+)(in) = a ubiquinol + NAD(+) + 4 H(+)(out). Functionally, core subunit of the mitochondrial membrane respiratory chain NADH dehydrogenase (Complex I) which catalyzes electron transfer from NADH through the respiratory chain, using ubiquinone as an electron acceptor. Essential for the catalytic activity of complex I. This is NADH-ubiquinone oxidoreductase chain 3 from Dasypus novemcinctus (Nine-banded armadillo).